Here is a 273-residue protein sequence, read N- to C-terminus: Undecaprenyl-diphosphatase (273 aa).

Helical transmembrane passes span 4-24, 43-63, 82-102, 108-128, 183-203, 217-237, and 253-273; these read LILI…FLPI, KAQV…CWEY, FVLN…LFIK, LFHP…ILWA, AAEF…FYDV, MFVV…RGFI, and IGFG…WSAG.

The protein belongs to the UppP family.

The protein resides in the cell inner membrane. The enzyme catalyses di-trans,octa-cis-undecaprenyl diphosphate + H2O = di-trans,octa-cis-undecaprenyl phosphate + phosphate + H(+). Its function is as follows. Catalyzes the dephosphorylation of undecaprenyl diphosphate (UPP). Confers resistance to bacitracin. The sequence is that of Undecaprenyl-diphosphatase from Nitrosomonas eutropha (strain DSM 101675 / C91 / Nm57).